The chain runs to 292 residues: GTP cyclohydrolase FolE2 (292 aa).

The protein belongs to the GTP cyclohydrolase IV family.

The catalysed reaction is GTP + H2O = 7,8-dihydroneopterin 3'-triphosphate + formate + H(+). The protein operates within cofactor biosynthesis; 7,8-dihydroneopterin triphosphate biosynthesis; 7,8-dihydroneopterin triphosphate from GTP: step 1/1. Its function is as follows. Converts GTP to 7,8-dihydroneopterin triphosphate. This Staphylococcus aureus (strain MRSA252) protein is GTP cyclohydrolase FolE2.